The primary structure comprises 143 residues: Rheacalcin-2 (143 aa).

Disulfide bonds link Cys6–Cys17, Cys34–Cys139, and Cys114–Cys131. Positions 13–140 (FDGRCFGFFP…CSDRKPFICE (128 aa)) constitute a C-type lectin domain. A phosphoserine mark is found at Ser66 and Ser68.

The protein localises to the secreted. It localises to the extracellular space. Its subcellular location is the extracellular matrix. In Rhea americana (Greater rhea), this protein is Rheacalcin-2.